The chain runs to 596 residues: Polyphenol oxidase B, chloroplastic (596 aa).

A disordered region spans residues 1–23 (MASVVCNSSSSTTTTTLKTPFTS). The N-terminal 87 residues, 1-87 (MASVVCNSSS…ANAIPLAASA (87 aa)), are a transit peptide targeting the chloroplast. The segment covering 8-23 (SSSSTTTTTLKTPFTS) has biased composition (low complexity). Disulfide bonds link Cys98/Cys114 and Cys113/Cys182. Residues His181, His199, His208, His329, His333, and His371 each contribute to the Cu cation site. A cross-link (2'-(S-cysteinyl)-histidine (Cys-His)) is located at residues 185 to 199 (CNGAYIIGGKELQVH).

Belongs to the tyrosinase family. Cu(2+) serves as cofactor.

Its subcellular location is the plastid. The protein resides in the chloroplast thylakoid lumen. The enzyme catalyses 2 catechol + O2 = 2 1,2-benzoquinone + 2 H2O. Catalyzes the oxidation of mono- and o-diphenols to o-diquinones. In Solanum lycopersicum (Tomato), this protein is Polyphenol oxidase B, chloroplastic.